The following is a 512-amino-acid chain: Aldehyde dehydrogenase B (512 aa).

Residues glutamate 268 and cysteine 307 contribute to the active site.

As to quaternary structure, homotetramer.

The catalysed reaction is an aldehyde + NADP(+) + H2O = a carboxylate + NADPH + 2 H(+). It carries out the reaction acetaldehyde + NADP(+) + H2O = acetate + NADPH + 2 H(+). It catalyses the reaction chloroacetaldehyde + NADP(+) + H2O = chloroacetate + NADPH + 2 H(+). The enzyme catalyses propanal + NADP(+) + H2O = propanoate + NADPH + 2 H(+). Its activity is regulated as follows. Magnesium increases enzyme activity with various substrates. In terms of biological role, catalyzes the NADP(+)-dependent oxidation of diverse aldehydes to their corresponding carboxylic acids, with a preference for acetaldehyde and chloroacetaldehyde. May play a role in detoxifying aldehydes present during stationary phase. Cannot use NAD(+) instead of NADP(+) as the electron acceptor. To a lesser extent is also able to oxidize propionaldehyde (propanal), benzaldehyde, mafosfamide, and 4-hydroperoxycyclophosphamide. Does not use either glyceraldehyde or glycolaldehyde as substrates. The chain is Aldehyde dehydrogenase B from Escherichia coli (strain K12).